The chain runs to 443 residues: Tubulin beta chain (443 aa).

Residues glutamine 11, glutamate 69, serine 138, glycine 142, threonine 143, glycine 144, asparagine 204, and asparagine 226 each coordinate GTP. Glutamate 69 provides a ligand contact to Mg(2+). Residues 424-443 (QYQDASAEEEGEFEGEEEEA) are disordered. Residues 429–443 (SAEEEGEFEGEEEEA) are compositionally biased toward acidic residues.

Belongs to the tubulin family. As to quaternary structure, dimer of alpha and beta chains. A typical microtubule is a hollow water-filled tube with an outer diameter of 25 nm and an inner diameter of 15 nM. Alpha-beta heterodimers associate head-to-tail to form protofilaments running lengthwise along the microtubule wall with the beta-tubulin subunit facing the microtubule plus end conferring a structural polarity. Microtubules usually have 13 protofilaments but different protofilament numbers can be found in some organisms and specialized cells. Mg(2+) serves as cofactor.

It localises to the cytoplasm. Its subcellular location is the cytoskeleton. Its function is as follows. Tubulin is the major constituent of microtubules, a cylinder consisting of laterally associated linear protofilaments composed of alpha- and beta-tubulin heterodimers. Microtubules grow by the addition of GTP-tubulin dimers to the microtubule end, where a stabilizing cap forms. Below the cap, tubulin dimers are in GDP-bound state, owing to GTPase activity of alpha-tubulin. This Chlamydomonas incerta protein is Tubulin beta chain (TUBB).